The primary structure comprises 328 residues: Homoarginine-6-hydroxylase 2-ODD-233 (328 aa).

Residues 183-288 (FWVCRLIGYP…VSVAFFYESN (106 aa)) form the Fe2OG dioxygenase domain. Residues H210, D212, and H268 each contribute to the Fe cation site. A 2-oxoglutarate-binding site is contributed by R278.

This sequence belongs to the iron/ascorbate-dependent oxidoreductase family. Fe(2+) is required as a cofactor. The cofactor is L-ascorbate. Expressed in roots and shoots.

It is found in the cytoplasm. The catalysed reaction is L-homoarginine + 2-oxoglutarate + O2 = 6-hydroxy-L-homoarginine + succinate + CO2. It carries out the reaction melatonin + 2-oxoglutarate + O2 = 2-hydroxymelatonin + succinate + CO2. Its function is as follows. 2-oxoglutarate-dependent dioxygenase catalyzing homoarginine 6-hydroxylation thus producing 6-hydroxy-L-homoarginine. Guanidine (Gd) is in turn synthesized by the spontaneous conversion of 6-hydroxy-L-homoarginine to (S)-2-amino-6-oxohexanoate (RHEA:79843); guanidine is a nitrogen-rich compound that can serve as a defense or signaling substance. Involved in melatonin degradation. Catalyzes the hydroxylation of melatonin to produce 2-hydroxymelatonin. This Oryza sativa subsp. japonica (Rice) protein is Homoarginine-6-hydroxylase 2-ODD-233.